Here is a 147-residue protein sequence, read N- to C-terminus: Large ribosomal subunit protein uL15 (147 aa).

The tract at residues 1 to 58 (MRLHDLKPAEGSTKKKKRVGRGIGSGHGKTSGRGHKGQNARSGGGVRPGFEGGQMPLT) is disordered. Residues 42–52 (SGGGVRPGFEG) are compositionally biased toward gly residues.

This sequence belongs to the universal ribosomal protein uL15 family. Part of the 50S ribosomal subunit.

In terms of biological role, binds to the 23S rRNA. In Caldanaerobacter subterraneus subsp. tengcongensis (strain DSM 15242 / JCM 11007 / NBRC 100824 / MB4) (Thermoanaerobacter tengcongensis), this protein is Large ribosomal subunit protein uL15.